Here is a 315-residue protein sequence, read N- to C-terminus: Methionyl-tRNA formyltransferase (315 aa).

Position 113-116 (113-116) interacts with (6S)-5,6,7,8-tetrahydrofolate; sequence SILP.

Belongs to the Fmt family.

The enzyme catalyses L-methionyl-tRNA(fMet) + (6R)-10-formyltetrahydrofolate = N-formyl-L-methionyl-tRNA(fMet) + (6S)-5,6,7,8-tetrahydrofolate + H(+). Its function is as follows. Attaches a formyl group to the free amino group of methionyl-tRNA(fMet). The formyl group appears to play a dual role in the initiator identity of N-formylmethionyl-tRNA by promoting its recognition by IF2 and preventing the misappropriation of this tRNA by the elongation apparatus. The polypeptide is Methionyl-tRNA formyltransferase (Aliivibrio fischeri (strain ATCC 700601 / ES114) (Vibrio fischeri)).